The primary structure comprises 171 residues: Secreted protein CSS3 (171 aa).

The N-terminal stretch at 1 to 20 is a signal peptide; the sequence is MVPLFGLFCIFSQLYSLCSA. N-linked (GlcNAc...) asparagine glycans are attached at residues Asn37, Asn139, and Asn159.

It localises to the cytoplasm. The protein localises to the secreted. The protein is Secreted protein CSS3 of Saccharomyces cerevisiae (strain ATCC 204508 / S288c) (Baker's yeast).